The chain runs to 257 residues: UPF0246 protein swp_3736 (257 aa).

The protein belongs to the UPF0246 family.

The sequence is that of UPF0246 protein swp_3736 from Shewanella piezotolerans (strain WP3 / JCM 13877).